The chain runs to 317 residues: Transaldolase (317 aa).

Residue Lys132 is the Schiff-base intermediate with substrate of the active site.

The protein belongs to the transaldolase family. Type 1 subfamily.

It localises to the cytoplasm. It catalyses the reaction D-sedoheptulose 7-phosphate + D-glyceraldehyde 3-phosphate = D-erythrose 4-phosphate + beta-D-fructose 6-phosphate. It participates in carbohydrate degradation; pentose phosphate pathway; D-glyceraldehyde 3-phosphate and beta-D-fructose 6-phosphate from D-ribose 5-phosphate and D-xylulose 5-phosphate (non-oxidative stage): step 2/3. Its function is as follows. Transaldolase is important for the balance of metabolites in the pentose-phosphate pathway. The protein is Transaldolase of Haemophilus influenzae (strain ATCC 51907 / DSM 11121 / KW20 / Rd).